The chain runs to 58 residues: Small ribosomal subunit protein bS21 (58 aa).

Residues 37-58 (FYEKPSVKRKKKSEAARKRKKF) form a disordered region. Residues 43–58 (VKRKKKSEAARKRKKF) show a composition bias toward basic residues.

This sequence belongs to the bacterial ribosomal protein bS21 family.

The chain is Small ribosomal subunit protein bS21 from Enterococcus faecalis (strain ATCC 700802 / V583).